Here is a 124-residue protein sequence, read N- to C-terminus: Large ribosomal subunit protein uL22c (124 aa).

Belongs to the universal ribosomal protein uL22 family. As to quaternary structure, part of the 50S ribosomal subunit.

The protein localises to the plastid. Its subcellular location is the chloroplast. Functionally, this protein binds specifically to 23S rRNA. Its function is as follows. The globular domain of the protein is located near the polypeptide exit tunnel on the outside of the subunit, while an extended beta-hairpin is found that lines the wall of the exit tunnel in the center of the 70S ribosome. In Amborella trichopoda, this protein is Large ribosomal subunit protein uL22c (rpl22).